Here is a 74-residue protein sequence, read N- to C-terminus: Protein kish-B (74 aa).

The N-terminal stretch at 1–22 is a signal peptide; it reads MTNVYSLDGLLVFALLFVCTCA. Residues 23–52 are Extracellular-facing; the sequence is YFRKVPRLRSWLLSEKKGVWGVFYKAAVIG. The chain crosses the membrane as a helical span at residues 53–73; sequence SRLHLAVSISCIAMAFYVLFI. Residue Lys-74 is a topological domain, cytoplasmic.

It belongs to the KISH family.

The protein resides in the golgi apparatus membrane. Functionally, involved in the early part of the secretory pathway. This chain is Protein kish-B (tmem167b), found in Xenopus laevis (African clawed frog).